A 365-amino-acid chain; its full sequence is AP2/ERF and B3 domain-containing protein Os01g0141000 (365 aa).

Residues 1–24 (MGVVSFSSTSSGASTATTESGGAV) are disordered. A DNA-binding region (AP2/ERF) is located at residues 68–123 (RYKGVVPQPNGRWGAQIYERHARVWLGTFPDEEAAARAYDVAALRYRGRDAATNFP). Positions 182–294 (FEKAVTPSDV…KLLFIDCKKN (113 aa)) form a DNA-binding region, TF-B3.

It localises to the nucleus. The sequence is that of AP2/ERF and B3 domain-containing protein Os01g0141000 from Oryza sativa subsp. japonica (Rice).